Consider the following 315-residue polypeptide: Methionyl-tRNA formyltransferase (315 aa).

111–114 lines the (6S)-5,6,7,8-tetrahydrofolate pocket; that stretch reads SLLP.

Belongs to the Fmt family.

The enzyme catalyses L-methionyl-tRNA(fMet) + (6R)-10-formyltetrahydrofolate = N-formyl-L-methionyl-tRNA(fMet) + (6S)-5,6,7,8-tetrahydrofolate + H(+). Functionally, attaches a formyl group to the free amino group of methionyl-tRNA(fMet). The formyl group appears to play a dual role in the initiator identity of N-formylmethionyl-tRNA by promoting its recognition by IF2 and preventing the misappropriation of this tRNA by the elongation apparatus. The chain is Methionyl-tRNA formyltransferase from Flavobacterium johnsoniae (strain ATCC 17061 / DSM 2064 / JCM 8514 / BCRC 14874 / CCUG 350202 / NBRC 14942 / NCIMB 11054 / UW101) (Cytophaga johnsonae).